The sequence spans 226 residues: ATP synthase subunit a (226 aa).

Transmembrane regions (helical) follow at residues F17–A37, L79–F99, S105–I125, F134–V154, L176–L196, and F199–A219.

It belongs to the ATPase A chain family. As to quaternary structure, F-type ATPases have 2 components, CF(1) - the catalytic core - and CF(0) - the membrane proton channel. CF(1) has five subunits: alpha(3), beta(3), gamma(1), delta(1), epsilon(1). CF(0) has three main subunits: a(1), b(2) and c(9-12). The alpha and beta chains form an alternating ring which encloses part of the gamma chain. CF(1) is attached to CF(0) by a central stalk formed by the gamma and epsilon chains, while a peripheral stalk is formed by the delta and b chains.

It localises to the cell inner membrane. Key component of the proton channel; it plays a direct role in the translocation of protons across the membrane. The sequence is that of ATP synthase subunit a from Campylobacter jejuni subsp. jejuni serotype O:6 (strain 81116 / NCTC 11828).